Consider the following 498-residue polypeptide: uncharacterized protein (498 aa).

329–336 (GNPGTGKS) is a binding site for ATP.

Its subcellular location is the secreted. It localises to the cell wall. This is an uncharacterized protein from Mycobacterium tuberculosis (strain CDC 1551 / Oshkosh).